The sequence spans 66 residues: Gallinacin-8 (66 aa).

The signal sequence occupies residues 1 to 19; sequence MKILYLLLAVLLTVLQSSL. Residues 20 to 25 constitute a propeptide that is removed on maturation; it reads GFMRVP. Disulfide bonds link Cys-31-Cys-60, Cys-38-Cys-54, and Cys-43-Cys-61.

It belongs to the beta-defensin family. In terms of tissue distribution, expressed in the liver, kidney, gall bladder, testis, ovary and male and femae reproductive tracts. Expressed in the ovarian stroma and the theca and granulosa layers of the ovarian follicle.

It localises to the secreted. The protein localises to the cytoplasmic granule. Its function is as follows. Has bactericidal activity. The sequence is that of Gallinacin-8 (GAL8) from Gallus gallus (Chicken).